The primary structure comprises 267 residues: Methylglyoxal reductase DkgB (267 aa).

Tyr-39 acts as the Proton donor in catalysis. Substrate is bound at residue His-97. An NADP(+)-binding site is contributed by 179–231; the sequence is MTLAYGKALAEPVIKTIAEQHGATPAQVILSWAMQLGYGVIPSSTKAANLASN.

Belongs to the aldo/keto reductase family. Monomer.

Its subcellular location is the cytoplasm. The catalysed reaction is hydroxyacetone + NADP(+) = methylglyoxal + NADPH + H(+). Aldo-keto reductase that significantly contributes to cellular methylglyoxal detoxification by catalyzing the NADPH-dependent conversion of methylglyoxal to acetol. The protein is Methylglyoxal reductase DkgB of Yersinia pestis.